Consider the following 1125-residue polypeptide: Speract receptor (1125 aa).

The signal sequence occupies residues 1 to 21; the sequence is MAHARHLFLFMVAFTITMVIA. At 22–510 the chain is on the extracellular side; it reads RLDFNPTIIN…GELCTNWALY (489 aa). 2 N-linked (GlcNAc...) asparagine glycosylation sites follow: N185 and N409. A helical membrane pass occupies residues 511-531; sequence LGASIPTFLIIFGGLIGFFIY. The Cytoplasmic segment spans residues 532-1125; it reads RKRAYEAALD…AANRVIPDDV (594 aa). The Protein kinase domain occupies 571–839; sequence MSAISVISNA…PNIMAVRTML (269 aa). The region spanning 914 to 1044 is the Guanylate cyclase domain; sequence SIFFSDIVGF…DTVNTASRME (131 aa).

It belongs to the adenylyl cyclase class-4/guanylyl cyclase family.

It localises to the membrane. It carries out the reaction GTP = 3',5'-cyclic GMP + diphosphate. Implicated as a cell-surface receptor on spermatozoa for 'speract' a chemotactic peptide, and on various other cells as a receptor for atrial natriuretic peptide. The protein is Speract receptor of Strongylocentrotus purpuratus (Purple sea urchin).